The primary structure comprises 24 residues: uncharacterized protein (24 aa).

This is an uncharacterized protein from Saccharomyces cerevisiae (strain ATCC 204508 / S288c) (Baker's yeast).